The primary structure comprises 337 residues: DNA-directed RNA polymerase subunit alpha (337 aa).

The tract at residues M1 to N226 is alpha N-terminal domain (alpha-NTD). The alpha C-terminal domain (alpha-CTD) stretch occupies residues L243–L337. The segment at F315–L337 is disordered. The span at D323–L337 shows a compositional bias: acidic residues.

Belongs to the RNA polymerase alpha chain family. Homodimer. The RNAP catalytic core consists of 2 alpha, 1 beta, 1 beta' and 1 omega subunit. When a sigma factor is associated with the core the holoenzyme is formed, which can initiate transcription.

The catalysed reaction is RNA(n) + a ribonucleoside 5'-triphosphate = RNA(n+1) + diphosphate. In terms of biological role, DNA-dependent RNA polymerase catalyzes the transcription of DNA into RNA using the four ribonucleoside triphosphates as substrates. This chain is DNA-directed RNA polymerase subunit alpha, found in Kineococcus radiotolerans (strain ATCC BAA-149 / DSM 14245 / SRS30216).